Consider the following 1322-residue polypeptide: FERM and PDZ domain-containing protein 4 (1322 aa).

One can recognise a WW domain in the interval Gln33–Leu66. The PDZ domain occupies Lys78–Tyr155. Residues Asn204–Arg519 form the FERM domain. Disordered regions lie at residues Ala809–Val847, Ser900–Lys927, Glu952–Val983, Arg1027–Asn1080, Ser1105–Asp1148, Ala1160–Leu1180, and His1207–Ser1227. Low complexity predominate over residues Glu902–Glu921. The segment covering Asn1041 to Thr1054 has biased composition (low complexity). Residues Thr1067 to Asn1080 are compositionally biased toward polar residues. Positions His1207–Ser1217 are enriched in polar residues.

Interacts (via C-terminus) with DLG1, DLG2, DLG3 and DLG4/PSD95. Interacts (via N-terminus) with ARHGEF7; the interaction is mediated by the PDZ domain. Interacts with GPSM2 (via TPR repeat region).

It is found in the cell projection. It localises to the dendritic spine. In terms of biological role, positive regulator of dendritic spine morphogenesis and density. Required for the maintenance of excitatory synaptic transmission. Binds phosphatidylinositol 4,5-bisphosphate. The protein is FERM and PDZ domain-containing protein 4 (FRMPD4) of Homo sapiens (Human).